The chain runs to 700 residues: Putative cysteine-rich receptor-like protein kinase 30 (700 aa).

An N-terminal signal peptide occupies residues 1–24 (MRQNNLFSLIFWLVPVSLIIVVSA). Gnk2-homologous domains lie at 25–129 (QLCS…NQPS) and 135–250 (LESV…LYPF). Over 25-285 (QLCSEKFGTF…KDEKTIHTGT (261 aa)) the chain is Extracellular. 5 N-linked (GlcNAc...) asparagine glycosylation sites follow: N63, N105, N146, N150, and N191. A helical membrane pass occupies residues 286–306 (IIGIVIVVAMVIIMALLALGV). Residues 307–700 (SVCRSRKKYQ…SKSMYRNTED (394 aa)) lie on the Cytoplasmic side of the membrane. In terms of domain architecture, Protein kinase spans 346-626 (FLASNKIGQG…IFQMLTNSSI (281 aa)). Residues 352-360 (IGQGGFGEV) and K374 contribute to the ATP site. The active-site Proton acceptor is the D474. S478 bears the Phosphoserine mark. T514 is modified (phosphothreonine). Y522 is subject to Phosphotyrosine.

Belongs to the protein kinase superfamily. Ser/Thr protein kinase family. CRK subfamily.

The protein localises to the membrane. It carries out the reaction L-seryl-[protein] + ATP = O-phospho-L-seryl-[protein] + ADP + H(+). It catalyses the reaction L-threonyl-[protein] + ATP = O-phospho-L-threonyl-[protein] + ADP + H(+). This is Putative cysteine-rich receptor-like protein kinase 30 (CRK30) from Arabidopsis thaliana (Mouse-ear cress).